A 376-amino-acid polypeptide reads, in one-letter code: 23S rRNA (uracil(747)-C(5))-methyltransferase RlmC (376 aa).

[4Fe-4S] cluster is bound by residues Cys-3, Cys-11, Cys-14, and Cys-87. S-adenosyl-L-methionine contacts are provided by Gln-212, Phe-241, Glu-262, and Asn-307. Cys-334 functions as the Nucleophile in the catalytic mechanism.

It belongs to the class I-like SAM-binding methyltransferase superfamily. RNA M5U methyltransferase family. RlmC subfamily.

It carries out the reaction uridine(747) in 23S rRNA + S-adenosyl-L-methionine = 5-methyluridine(747) in 23S rRNA + S-adenosyl-L-homocysteine + H(+). In terms of biological role, catalyzes the formation of 5-methyl-uridine at position 747 (m5U747) in 23S rRNA. This chain is 23S rRNA (uracil(747)-C(5))-methyltransferase RlmC, found in Yersinia pseudotuberculosis serotype O:1b (strain IP 31758).